A 117-amino-acid chain; its full sequence is uncharacterized protein (117 aa).

This is an uncharacterized protein from Encephalitozoon cuniculi (strain GB-M1) (Microsporidian parasite).